A 642-amino-acid polypeptide reads, in one-letter code: MPIITLPDGSQRQFDNSVSTMDVALSIGPGLAKATIAGRVNGQRVDACDLIEEDASLEIITTKDEVDGLEIVRHSCAHLLGHALKQLYPNAKMAIGPTIDNGFYYDIDLEESLTQEDLEKIEARMKALAKTKYQVIKKKVSWQEARDAFEARGETYKMEILDENVSRDDRPGLYHHEEYIDMCRGPHVPNMSFCQHFTLLNVAGAYWRGNSDNKMLQRIYGTAFHDKKALKDHLTRLEEAAKRDHRKIGKQLDLFHMQQEAPGMVFWHHNGWSVFRDLEVFIREKLTEYGYQEVKGPLMMDRVLWERSGHWDKYADAMFTTSSENREYAIKPMNCPGHVQIFNQGLKSYRDLPLRMAEFGSCHRNEPSGALHGIMRVRGFTQDDAHIFCTESQIQDEVTNCIKMVYDTYQTFGFDNIAVKLSTRPEQRVGSDEIWDQSEEALKQALESMDIAYEIQEGEGAFYGPKIEFTLFDCLGRAWQCGTVQLDFNLPNRLGATYVGENNERLVPVMIHRAILGSLERFIGILIEEYAGFFPTWLAPEQAVIMNITDKQADYVQEIAQKLQKCGIRAKADLRNEKIGFKIREHTLKRVPFMLVCGDQEMEAGEIAVRTRKGNDLGKFKVDDFVSYIQDQIASRKLNLEE.

Residues 1–61 (MPIITLPDGS…EEDASLEIIT (61 aa)) form the TGS domain. Residues 244–535 (DHRKIGKQLD…LIEEYAGFFP (292 aa)) are catalytic. Zn(2+) is bound by residues cysteine 335, histidine 386, and histidine 512.

The protein belongs to the class-II aminoacyl-tRNA synthetase family. As to quaternary structure, homodimer. It depends on Zn(2+) as a cofactor.

Its subcellular location is the cytoplasm. The catalysed reaction is tRNA(Thr) + L-threonine + ATP = L-threonyl-tRNA(Thr) + AMP + diphosphate + H(+). Its function is as follows. Catalyzes the attachment of threonine to tRNA(Thr) in a two-step reaction: L-threonine is first activated by ATP to form Thr-AMP and then transferred to the acceptor end of tRNA(Thr). Also edits incorrectly charged L-seryl-tRNA(Thr). The sequence is that of Threonine--tRNA ligase from Vibrio vulnificus (strain YJ016).